The sequence spans 259 residues: 1,2-dihydroxy-1,2-dihydronaphthalene dehydrogenase (259 aa).

8-32 contributes to the NAD(+) binding site; that stretch reads SITGAGSGIGLELVRSFKSAGYYVS. Ser-140 provides a ligand contact to substrate. Catalysis depends on Tyr-153, which acts as the Proton acceptor.

This sequence belongs to the short-chain dehydrogenases/reductases (SDR) family.

It carries out the reaction (1R,2S)-1,2-dihydronaphthalene-1,2-diol + NAD(+) = naphthalene-1,2-diol + NADH + H(+). The enzyme catalyses cis-1,2-dihydroxy-1,2-dihydrodibenzothiophene + NAD(+) = 1,2-dihydroxydibenzothiophene + NADH + H(+). It functions in the pathway aromatic compound metabolism; naphthalene degradation. In terms of biological role, catalyzes the oxidation of naphthalene dihydrodiol into 1,2-dihydroxynaphthalene. In Pseudomonas sp. (strain C18), this protein is 1,2-dihydroxy-1,2-dihydronaphthalene dehydrogenase (doxE).